We begin with the raw amino-acid sequence, 244 residues long: Lipoprotein-releasing system ATP-binding protein LolD (244 aa).

In terms of domain architecture, ABC transporter spans isoleucine 19–valine 244. Glycine 55–serine 62 is a binding site for ATP.

This sequence belongs to the ABC transporter superfamily. Lipoprotein translocase (TC 3.A.1.125) family. As to quaternary structure, the complex is composed of two ATP-binding proteins (LolD) and two transmembrane proteins (LolC and LolE).

The protein localises to the cell inner membrane. In terms of biological role, part of the ABC transporter complex LolCDE involved in the translocation of mature outer membrane-directed lipoproteins, from the inner membrane to the periplasmic chaperone, LolA. Responsible for the formation of the LolA-lipoprotein complex in an ATP-dependent manner. This is Lipoprotein-releasing system ATP-binding protein LolD from Xanthomonas axonopodis pv. citri (strain 306).